Reading from the N-terminus, the 58-residue chain is Large ribosomal subunit protein bL32 (58 aa).

A compositionally biased stretch (basic residues) spans M1–Q15. Positions M1–K23 are disordered.

Belongs to the bacterial ribosomal protein bL32 family.

The protein is Large ribosomal subunit protein bL32 of Synechococcus sp. (strain CC9902).